Here is a 364-residue protein sequence, read N- to C-terminus: Chorismate synthase (364 aa).

The segment at 41-60 (MQHDLDRRRPGTSRYTTARR) is disordered. NADP(+) contacts are provided by Arg-48 and Arg-54. FMN contacts are provided by residues 125-127 (RSS), 238-239 (NA), Gly-278, 293-297 (KPTSS), and Arg-319.

This sequence belongs to the chorismate synthase family. As to quaternary structure, homotetramer. It depends on FMNH2 as a cofactor.

It catalyses the reaction 5-O-(1-carboxyvinyl)-3-phosphoshikimate = chorismate + phosphate. Its pathway is metabolic intermediate biosynthesis; chorismate biosynthesis; chorismate from D-erythrose 4-phosphate and phosphoenolpyruvate: step 7/7. In terms of biological role, catalyzes the anti-1,4-elimination of the C-3 phosphate and the C-6 proR hydrogen from 5-enolpyruvylshikimate-3-phosphate (EPSP) to yield chorismate, which is the branch point compound that serves as the starting substrate for the three terminal pathways of aromatic amino acid biosynthesis. This reaction introduces a second double bond into the aromatic ring system. In Shewanella sp. (strain ANA-3), this protein is Chorismate synthase.